A 609-amino-acid polypeptide reads, in one-letter code: MDGFAQDWPNLPRSDNGLHMDQLVGELPTDGGFEPQTRARSNTWPCPRPENFVEPVDELDSTKASNQQLASGDPQQAMQNANAAKKNSSRRNAWGNLSYADLITHAIGSATDKRLTLSQIYEWMVQNVSYFKDKGDSNSSAGWKNSIRHNLSLHNRFMRVQNEGTGKSSWWMLNPEAKPGKSVRRRAASMETSRYEKRRGRAKKRVEALRQGGVVGLNDATPSPSSSVSEGLDHFPESPLHSGGFQLSPDFRQRASSNASSCGRLSPIRALDLEPDWGFSVDYQNTTMTQAQAQQLDQLAGSMAEELKLQSDMLQQQGFSAASGLPTQPPPPYQPPQQPQLPQGYSLNGPGYAAMQPQPQPQGQGQCLLHRSLNCGCLHSAPVRDGLSPNSVTTTMSPAYPNSEPSSDSLNTYSNVLLDGSADNAALLVQHQQQQQQQQQQQRQQLSSGLEGQCLEALNSEQIDEFNLEDFQGGLECNVEELLQQEMRYDGLLDINIPLAAVNTNTNNVILTNNSTNSGSSNAASNSSAGVQLNQLQAQLQLQQQQQQQQQQQQHQQQLLMSNNNNNNNNNNNSNNSLELATQTATANLNARVQYSQPSVVTSPPSWVH.

Disordered regions lie at residues 1–89 (MDGF…KNSS) and 181–263 (KSVR…SSCG). Position 43 is a phosphothreonine; by PKB/AKT1 (Thr-43). A compositionally biased stretch (polar residues) spans 62-79 (TKASNQQLASGDPQQAMQ). Low complexity predominate over residues 80 to 89 (NANAAKKNSS). Positions 94 to 200 (WGNLSYADLI…ETSRYEKRRG (107 aa)) form a DNA-binding region, fork-head. Ser-189 carries the post-translational modification Phosphoserine; by PKB/AKT1. Polar residues-rich tracts occupy residues 220 to 229 (ATPSPSSSVS) and 254 to 263 (RASSNASSCG). A Phosphoserine; by PKB/AKT1 modification is found at Ser-257. Phosphoserine occurs at positions 260, 261, and 266. Disordered regions lie at residues 321-365 (AASG…QGQG) and 384-411 (RDGL…DSLN). Over residues 327-339 (TQPPPPYQPPQQP) the composition is skewed to pro residues. Residues 388-397 (SPNSVTTTMS) are compositionally biased toward polar residues.

Interacts with melt.

The protein localises to the cytoplasm. Its subcellular location is the nucleus. Functionally, transcription factor involved in the regulation of the insulin signaling pathway. Consistently activates both the downstream target Thor\d4EBP and the feedback control target InR. Involved in negative regulation of the cell cycle, modulating cell growth and proliferation. In response to cellular stresses, such as nutrient deprivation or increased levels of reactive oxygen species, foxo is activated and inhibits growth through the action of target genes such as Thor. Foxo activated in the adult fat body can regulate lifespan in adults; an insulin peptide itself may function as one secondary messenger of insulin-regulated aging. Also regulates Lip4, homolog of human acid lipases, thereby acting as a key modulator of lipid metabolism by insulin signaling and integrates insulin responses to glucose and lipid homeostasis. This Drosophila virilis (Fruit fly) protein is Forkhead box protein O.